Reading from the N-terminus, the 369-residue chain is 4-hydroxy-3-methylbut-2-en-1-yl diphosphate synthase (flavodoxin) (369 aa).

4 residues coordinate [4Fe-4S] cluster: cysteine 270, cysteine 273, cysteine 305, and glutamate 312.

Belongs to the IspG family. Requires [4Fe-4S] cluster as cofactor.

It catalyses the reaction (2E)-4-hydroxy-3-methylbut-2-enyl diphosphate + oxidized [flavodoxin] + H2O + 2 H(+) = 2-C-methyl-D-erythritol 2,4-cyclic diphosphate + reduced [flavodoxin]. It functions in the pathway isoprenoid biosynthesis; isopentenyl diphosphate biosynthesis via DXP pathway; isopentenyl diphosphate from 1-deoxy-D-xylulose 5-phosphate: step 5/6. Its function is as follows. Converts 2C-methyl-D-erythritol 2,4-cyclodiphosphate (ME-2,4cPP) into 1-hydroxy-2-methyl-2-(E)-butenyl 4-diphosphate. The sequence is that of 4-hydroxy-3-methylbut-2-en-1-yl diphosphate synthase (flavodoxin) from Pseudomonas putida (strain ATCC 47054 / DSM 6125 / CFBP 8728 / NCIMB 11950 / KT2440).